Consider the following 210-residue polypeptide: Scoloptoxin SSD558 (210 aa).

Residues 1–23 form the signal peptide; the sequence is MNILLPSTLFVLLMFQIIGSGMG.

Post-translationally, contains 3 disulfide bonds. In terms of tissue distribution, expressed by the venom gland.

Its subcellular location is the secreted. The protein is Scoloptoxin SSD558 of Scolopendra dehaani (Thai centipede).